The primary structure comprises 1196 residues: ATP-dependent helicase/deoxyribonuclease subunit B (1196 aa).

The [4Fe-4S] cluster site is built by C823, C1149, C1152, and C1158.

It belongs to the helicase family. AddB/RexB type 2 subfamily. Heterodimer of AddA and RexB. Mg(2+) serves as cofactor. It depends on [4Fe-4S] cluster as a cofactor.

The heterodimer acts as both an ATP-dependent DNA helicase and an ATP-dependent, dual-direction single-stranded exonuclease. Recognizes the chi site generating a DNA molecule suitable for the initiation of homologous recombination. This subunit has 5' -&gt; 3' nuclease activity but not helicase activity. This chain is ATP-dependent helicase/deoxyribonuclease subunit B, found in Enterococcus faecalis (strain ATCC 700802 / V583).